The following is a 514-amino-acid chain: M-phase inducer phosphatase 1 (514 aa).

Positions 73-83 (MGSSESTDSGF) match the Phosphodegron motif. Ser75 is modified (phosphoserine; by CHEK1). Phosphoserine; by NEK11 occurs at positions 78, 81, and 87. At Ser106 the chain carries Phosphoserine. Residue Ser123 is modified to Phosphoserine; by CHEK1 and CHEK2. Residues 140–142 (KEN) carry the KEN box motif. Position 172 is a phosphoserine; by CHEK1 (Ser172). Residues 256–308 (PCGSSTRAVLKRADRSHEEPPRGTKRRKSVPSPVKAKADVPEPAQLPSQSLSL) are disordered. Over residues 266–277 (KRADRSHEEPPR) the composition is skewed to basic and acidic residues. Phosphoserine; by CHEK1 and CHEK2 is present on residues Ser271 and Ser284. Residue Ser311 is modified to Phosphoserine. Residues 366–472 (LIKEFVIIDC…FFLKCQSHCE (107 aa)) enclose the Rhodanese domain. Residue Cys421 is part of the active site. Residue Thr497 is modified to Phosphothreonine; by CHEK1. A phosphoserine; by PLK3 mark is found at Ser503 and Ser509.

This sequence belongs to the MPI phosphatase family. Interacts with CCNB1/cyclin B1. Interacts with YWHAE/14-3-3 epsilon when phosphorylated. Interacts with CUL1 specifically when CUL1 is neddylated and active. Interacts with BTRC/BTRCP1 and FBXW11/BTRCP2. Interactions with CUL1, BTRC and FBXW11 are enhanced upon DNA damage. Interacts with CHEK2; mediates CDC25A phosphorylation and degradation in response to infrared-induced DNA damages. Interacts with HSP90AB1; prevents heat shock-mediated CDC25A degradation and contributes to cell cycle progression. Phosphorylated by CHEK1 on Ser-75, Ser-123, Ser-172, Ser-271, Ser-284 and Thr-497 during checkpoint mediated cell cycle arrest. Also phosphorylated by CHEK2 on Ser-123, Ser-271, and Ser-284 during checkpoint mediated cell cycle arrest. Phosphorylation on Ser-172 and Thr-497 creates binding sites for YWHAE/14-3-3 epsilon which inhibits CDC25A. Phosphorylation on Ser-75, Ser-123, Ser-172, Ser-271 and Ser-284 may also promote ubiquitin-dependent proteolysis of CDC25A by the SCF complex. Phosphorylation of CDC25A at Ser-75 by CHEK1 primes it for subsequent phosphorylation at Ser-75, Ser-81 and Ser-87 by NEK11. Phosphorylation by NEK11 is required for BTRC-mediated polyubiquitination and degradation. Phosphorylation by PIM1 leads to an increase in phosphatase activity. Phosphorylated by PLK3 following DNA damage, leading to promote its ubiquitination and degradation. In terms of processing, ubiquitinated by the anaphase promoting complex/cyclosome (APC/C) ubiquitin ligase complex that contains FZR1/CDH1 during G1 phase leading to its degradation by the proteasome. Ubiquitinated by a SCF complex containing BTRC and FBXW11 during S phase leading to its degradation by the proteasome. Deubiquitination by USP17L2/DUB3 leads to its stabilization. In terms of tissue distribution, ubiquitously expressed in most developing tissue. High levels in the testis and lower levels in the ovary, particularly in germ cells. Lower levels also in kidney, liver, heart and muscle.

The enzyme catalyses O-phospho-L-tyrosyl-[protein] + H2O = L-tyrosyl-[protein] + phosphate. Its activity is regulated as follows. Stimulated by B-type cyclins. Stimulated by PIM1-mediated phosphorylation. Functionally, tyrosine protein phosphatase which functions as a dosage-dependent inducer of mitotic progression. Directly dephosphorylates CDK1 and stimulates its kinase activity. Also dephosphorylates CDK2 in complex with cyclin-E, in vitro. This Mus musculus (Mouse) protein is M-phase inducer phosphatase 1 (Cdc25a).